A 704-amino-acid polypeptide reads, in one-letter code: Transmembrane protein DDB_G0274347 (704 aa).

Residues 37 to 145 are disordered; that stretch reads VEQRDEVNDE…NNYNNNNTPT (109 aa). Positions 43 to 67 are enriched in acidic residues; the sequence is VNDEFQEEEEELEDDDDDEDDEDEI. Positions 85–99 are enriched in basic and acidic residues; sequence HNDKEKEKKKDKQEE. Over residues 100–113 the composition is skewed to acidic residues; it reads YIDSDDDDDDDGDE. Positions 114-142 are enriched in low complexity; sequence NYYLNNNNNNNNNINNNNNYNNNNYNNNN. N-linked (GlcNAc...) asparagine glycosylation is present at N166. Residues 255–275 form a helical membrane-spanning segment; the sequence is ALISMALLISLVAIIFYLPLP. An N-linked (GlcNAc...) asparagine glycan is attached at N354. The next 3 helical transmembrane spans lie at 370–390, 414–434, and 513–533; these read LKIF…WLFA, TLLV…LYFI, and LVSF…FLIS. Over residues 550–565 the composition is skewed to low complexity; sequence TTTTTINTTTNTTSNT. The tract at residues 550-576 is disordered; that stretch reads TTTTTINTTTNTTSNTSQQSNPLSKRL. N-linked (GlcNAc...) asparagine glycosylation is found at N556, N560, and N564. Polar residues predominate over residues 566-576; it reads SQQSNPLSKRL. Transmembrane regions (helical) follow at residues 609-629 and 638-658; these read FIIV…GVPP and IFFI…LIII.

It localises to the membrane. The polypeptide is Transmembrane protein DDB_G0274347 (Dictyostelium discoideum (Social amoeba)).